A 700-amino-acid polypeptide reads, in one-letter code: Elongation factor G (700 aa).

In terms of domain architecture, tr-type G spans 8–290 (DRYRNVGIMA…AMIMYMPSPL (283 aa)). GTP-binding positions include 17-24 (AHIDAGKT), 88-92 (DTPGH), and 142-145 (NKMD).

This sequence belongs to the TRAFAC class translation factor GTPase superfamily. Classic translation factor GTPase family. EF-G/EF-2 subfamily.

It is found in the cytoplasm. Catalyzes the GTP-dependent ribosomal translocation step during translation elongation. During this step, the ribosome changes from the pre-translocational (PRE) to the post-translocational (POST) state as the newly formed A-site-bound peptidyl-tRNA and P-site-bound deacylated tRNA move to the P and E sites, respectively. Catalyzes the coordinated movement of the two tRNA molecules, the mRNA and conformational changes in the ribosome. The sequence is that of Elongation factor G from Vesicomyosocius okutanii subsp. Calyptogena okutanii (strain HA).